A 189-amino-acid chain; its full sequence is MAREPREGRGRERERDRDGDELIDKLVTINRVAKVVKGGRRFAFAALVVVGDQKGRVGFGAGKAKEVPEAIRKATERAKRGMIRVPMKEGRTLHHDIEGRFGAGHVVLRAAPPGTGIIAGGPMRAVFETLGIGDVVAKSLGSRNPHNMVKATVAALSQCASPRSVASRRGKKVADLFGPKREKEAPADV.

The region spanning L22–V85 is the S5 DRBM domain. Residues S164 to V189 form a disordered region. Over residues K172–V189 the composition is skewed to basic and acidic residues.

Belongs to the universal ribosomal protein uS5 family. As to quaternary structure, part of the 30S ribosomal subunit. Contacts proteins S4 and S8.

Its function is as follows. With S4 and S12 plays an important role in translational accuracy. In terms of biological role, located at the back of the 30S subunit body where it stabilizes the conformation of the head with respect to the body. In Acidiphilium cryptum (strain JF-5), this protein is Small ribosomal subunit protein uS5.